Reading from the N-terminus, the 158-residue chain is UPF0262 protein Rsph17029_2283 (158 aa).

It belongs to the UPF0262 family.

The chain is UPF0262 protein Rsph17029_2283 from Cereibacter sphaeroides (strain ATCC 17029 / ATH 2.4.9) (Rhodobacter sphaeroides).